The primary structure comprises 427 residues: Gamma-glutamyl phosphate reductase (427 aa).

The protein belongs to the gamma-glutamyl phosphate reductase family.

It is found in the cytoplasm. It catalyses the reaction L-glutamate 5-semialdehyde + phosphate + NADP(+) = L-glutamyl 5-phosphate + NADPH + H(+). It participates in amino-acid biosynthesis; L-proline biosynthesis; L-glutamate 5-semialdehyde from L-glutamate: step 2/2. Catalyzes the NADPH-dependent reduction of L-glutamate 5-phosphate into L-glutamate 5-semialdehyde and phosphate. The product spontaneously undergoes cyclization to form 1-pyrroline-5-carboxylate. In Gluconobacter oxydans (strain 621H) (Gluconobacter suboxydans), this protein is Gamma-glutamyl phosphate reductase.